We begin with the raw amino-acid sequence, 178 residues long: Nicotinamide-nucleotide adenylyltransferase (178 aa).

The protein belongs to the archaeal NMN adenylyltransferase family. Homohexamer.

It is found in the cytoplasm. The catalysed reaction is beta-nicotinamide D-ribonucleotide + ATP + H(+) = diphosphate + NAD(+). It functions in the pathway cofactor biosynthesis; NAD(+) biosynthesis; NAD(+) from nicotinamide D-ribonucleotide: step 1/1. In Methanothermobacter thermautotrophicus (strain ATCC 29096 / DSM 1053 / JCM 10044 / NBRC 100330 / Delta H) (Methanobacterium thermoautotrophicum), this protein is Nicotinamide-nucleotide adenylyltransferase.